We begin with the raw amino-acid sequence, 4563 residues long: Apolipoprotein B-100 (4563 aa).

A signal peptide spans 1–27 (MDPPRPALLALLALPALLLLLLAGARA). Positions 32-126 (LENVSLVCPK…KNSEEFAAAM (95 aa)) are heparin-binding. N-linked (GlcNAc...) asparagine glycosylation is present at Asn-34. Intrachain disulfides connect Cys-39–Cys-88 and Cys-78–Cys-97. The Vitellogenin domain maps to 46–672 (FKHLRKYTYN…PNNYLPKESM (627 aa)). Asn-185 carries an N-linked (GlcNAc...) asparagine glycan. 4 cysteine pairs are disulfide-bonded: Cys-186–Cys-212, Cys-245–Cys-261, Cys-385–Cys-390, and Cys-478–Cys-513. Residues 232–306 (TRPLSTLISS…RFFGEGTKKM (75 aa)) are heparin-binding. Positions 902–959 (NTNFFHESGLEAHVALKAGKLKFIIPSPKRPVKLLSGGNTLHLVSTTKTEVIPPLIEN) are heparin-binding. Residues Cys-966 and Cys-976 are joined by a disulfide bond. N-linked (GlcNAc...) asparagine glycosylation is present at Asn-983. Cys-1112 is lipidated: S-palmitoyl cysteine. Residues Asn-1368, Asn-1377, and Asn-1523 are each glycosylated (N-linked (GlcNAc...) asparagine). At Lys-2004 the chain carries N6-acetyllysine. The interval 2043–2178 (RDAVEKPQEF…EKLSQLQTYM (136 aa)) is heparin-binding. N-linked (GlcNAc...) asparagine glycosylation is found at Asn-2239, Asn-2560, Asn-2779, Asn-2982, and Asn-3101. The segment at 3161–3236 (FLKTTKQSFD…KIKFDKYKAE (76 aa)) is heparin-binding. The segment at 3174 to 3184 (KAQYKKNKHRH) is basic (possible receptor binding region). Residues Cys-3194 and Cys-3324 are joined by a disulfide bond. Asn-3224 carries an N-linked (GlcNAc...) asparagine glycan. Ser-3279 carries the phosphoserine modification. Residues Asn-3336 and Asn-3358 are each glycosylated (N-linked (GlcNAc...) asparagine). An LDL receptor binding region spans residues 3373–3393 (VIDALQYKLEGTTRLTRKRGL). A heparin-binding region spans residues 3383–3516 (GTTRLTRKRG…REYSGTIASE (134 aa)). The interval 3386–3394 (RLTRKRGLK) is basic (possible receptor binding region). Residues Asn-3411, Asn-3465, and Asn-3895 are each glycosylated (N-linked (GlcNAc...) asparagine). Ser-4048 carries the phosphoserine; by FAM20C modification. At Thr-4052 the chain carries Phosphothreonine. Asn-4237 and Asn-4431 each carry an N-linked (GlcNAc...) asparagine glycan.

In terms of assembly, interacts with PCSK9. Interacts with MTTP. Interacts with AUP1. Interacts with CIDEB. In terms of processing, palmitoylated; structural requirement for proper assembly of the hydrophobic core of the lipoprotein particle.

The protein resides in the cytoplasm. The protein localises to the secreted. It localises to the lipid droplet. In terms of biological role, apolipoprotein B is a major protein constituent of chylomicrons (apo B-48), LDL (apo B-100) and VLDL (apo B-100). Apo B-100 functions as a recognition signal for the cellular binding and internalization of LDL particles by the apoB/E receptor. The protein is Apolipoprotein B-100 (APOB) of Homo sapiens (Human).